The sequence spans 294 residues: Large ribosomal subunit protein uL4m (294 aa).

The tract at residues 120–139 is disordered; sequence VRGGGRKPWQQKGSGRARHG. The residue at position 147 (Arg147) is an Omega-N-methylarginine.

It belongs to the universal ribosomal protein uL4 family. Component of the mitochondrial ribosome large subunit (39S) which comprises a 16S rRNA and about 50 distinct proteins. Interacts with MIEF1 upstream open reading frame protein.

It is found in the mitochondrion. This Bos taurus (Bovine) protein is Large ribosomal subunit protein uL4m (MRPL4).